Consider the following 272-residue polypeptide: Elongation factor Ts (272 aa).

Residues 76–79 (TDFV) are involved in Mg(2+) ion dislocation from EF-Tu.

Belongs to the EF-Ts family.

Its subcellular location is the cytoplasm. Associates with the EF-Tu.GDP complex and induces the exchange of GDP to GTP. It remains bound to the aminoacyl-tRNA.EF-Tu.GTP complex up to the GTP hydrolysis stage on the ribosome. The protein is Elongation factor Ts of Corynebacterium jeikeium (strain K411).